The chain runs to 553 residues: Adenine deaminase (553 aa).

This sequence belongs to the metallo-dependent hydrolases superfamily. Adenine deaminase family. Mn(2+) is required as a cofactor.

The catalysed reaction is adenine + H2O + H(+) = hypoxanthine + NH4(+). The sequence is that of Adenine deaminase from Methanosarcina acetivorans (strain ATCC 35395 / DSM 2834 / JCM 12185 / C2A).